We begin with the raw amino-acid sequence, 90 residues long: DNA-directed RNA polymerase subunit Rpo11 (90 aa).

It belongs to the archaeal Rpo11/eukaryotic RPB11/RPC19 RNA polymerase subunit family. Part of the RNA polymerase complex.

Its subcellular location is the cytoplasm. The catalysed reaction is RNA(n) + a ribonucleoside 5'-triphosphate = RNA(n+1) + diphosphate. Its function is as follows. DNA-dependent RNA polymerase (RNAP) catalyzes the transcription of DNA into RNA using the four ribonucleoside triphosphates as substrates. This is DNA-directed RNA polymerase subunit Rpo11 from Metallosphaera sedula (strain ATCC 51363 / DSM 5348 / JCM 9185 / NBRC 15509 / TH2).